We begin with the raw amino-acid sequence, 136 residues long: Small ribosomal subunit protein uS8 (136 aa).

This sequence belongs to the universal ribosomal protein uS8 family. Part of the 30S ribosomal subunit. Contacts proteins S5 and S12.

Functionally, one of the primary rRNA binding proteins, it binds directly to 16S rRNA central domain where it helps coordinate assembly of the platform of the 30S subunit. In Sulfurihydrogenibium sp. (strain YO3AOP1), this protein is Small ribosomal subunit protein uS8.